The sequence spans 275 residues: Type III pantothenate kinase (275 aa).

An ATP-binding site is contributed by 6-13; sequence DAGNTNIV. 108-111 serves as a coordination point for substrate; sequence GADR. Catalysis depends on D110, which acts as the Proton acceptor. D130 is a K(+) binding site. T133 is a binding site for ATP. Position 187 (T187) interacts with substrate.

The protein belongs to the type III pantothenate kinase family. In terms of assembly, homodimer. It depends on NH4(+) as a cofactor. K(+) serves as cofactor.

It localises to the cytoplasm. It carries out the reaction (R)-pantothenate + ATP = (R)-4'-phosphopantothenate + ADP + H(+). Its pathway is cofactor biosynthesis; coenzyme A biosynthesis; CoA from (R)-pantothenate: step 1/5. Its function is as follows. Catalyzes the phosphorylation of pantothenate (Pan), the first step in CoA biosynthesis. The polypeptide is Type III pantothenate kinase (Zymomonas mobilis subsp. mobilis (strain ATCC 31821 / ZM4 / CP4)).